The sequence spans 255 residues: Small ribosomal subunit protein uS2 (255 aa).

Belongs to the universal ribosomal protein uS2 family.

The polypeptide is Small ribosomal subunit protein uS2 (Streptococcus uberis (strain ATCC BAA-854 / 0140J)).